The chain runs to 424 residues: Satellite RNA 48 kDa protein (424 aa).

The tract at residues 51 to 83 (PRDGGGRKRKADGSQGRPSNNPGRPSRKWTEKT) is disordered.

It belongs to the nepovirus satellite RNA 48 kDa protein family.

This is Satellite RNA 48 kDa protein from Tomato black ring virus (strain L) (TBRV).